Reading from the N-terminus, the 1063-residue chain is Unconventional myosin-Ic (1063 aa).

At Met1 the chain carries N-acetylmethionine. Thr10 carries the phosphoserine modification. One can recognise a Myosin motor domain in the interval 47–731 (GVQDFVLLEN…TLFATEDSLE (685 aa)). Residues Asn88, Tyr96, 139 to 148 (SGESGAGKTE), and 192 to 196 (NDNSS) contribute to the ATP site. At Lys383 the chain carries N6-methyllysine. Ser408 is modified (phosphoserine). Residue Lys486 is modified to N6-acetyllysine. Residue Ser536 is modified to Phosphoserine. An actin-binding region spans residues 608 to 630 (LLQLVEILRSKEPAYIRCIKPND). 2 IQ domains span residues 734 to 757 (RQSL…FLRV) and 758 to 786 (KRSA…AAQT). Ser864 and Ser1041 each carry phosphoserine. The 175-residue stretch at 885–1059 (KDNYPQSVPR…NGHLAVVAPR (175 aa)) folds into the TH1 domain.

It belongs to the TRAFAC class myosin-kinesin ATPase superfamily. Myosin family. As to quaternary structure, interacts (via its IQ motifs) with CABP1 and CIB1; the interaction with CABP1 and CIB1 is calcium-dependent. Interacts (via tail domain) with PLEKHB1 (via PH domain); the interaction is not affected by the presence or absence of calcium and CALM. Interacts with POLR1A. Interacts with POLR2A. Component of the B-WICH complex, at least composed of SMARCA5/SNF2H, BAZ1B/WSTF, SF3B1, DEK, MYO1C, ERCC6, MYBBP1A and DDX21. Interacts (via its IQ motifs) with CALM; this precludes interaction with YWHAB. Interacts with YWHAB; this precludes interaction with CALM. Interacts with RPS6. Interacts with actin. Interacts with LLPH. Interacts with GLUT4. Interacts (via its IQ motifs) with SH3BGRL3; the interaction is dependent on calcium and takes place at membrane ruffles. Isoform 2 contains a N-acetylmethionine at position 1. In terms of tissue distribution, isoform 3 is expressed in small intestine, pancreas, brain, kidney, skin, heart muscle, testis, striated muscle, spleen, liver and lung (at protein level). Expressed in brain, testis, adrenal glands, thymus, spleen, kidney, lung, heart, cochlea and vestibule. Expressed in sensory hair cells of the inner ear. Expressed in adipocytes.

It is found in the cytoplasm. It localises to the nucleus. The protein localises to the cell cortex. Its subcellular location is the cell projection. The protein resides in the stereocilium membrane. It is found in the cytoplasmic vesicle. It localises to the ruffle membrane. The protein localises to the nucleolus. Its subcellular location is the nucleoplasm. In terms of biological role, myosins are actin-based motor molecules with ATPase activity. Unconventional myosins serve in intracellular movements. Their highly divergent tails bind to membranous compartments, which then are moved relative to actin filaments. Involved in glucose transporter recycling in response to insulin by regulating movement of intracellular GLUT4-containing vesicles to the plasma membrane. Component of the hair cell's (the sensory cells of the inner ear) adaptation-motor complex. Acts as a mediator of adaptation of mechanoelectrical transduction in stereocilia of vestibular hair cells. Binds phosphoinositides and links the actin cytoskeleton to cellular membranes. Its function is as follows. Involved in regulation of transcription. Associated with transcriptional active ribosomal genes. Appears to cooperate with the WICH chromatin-remodeling complex to facilitate transcription. Necessary for the formation of the first phosphodiester bond during transcription initiation. The polypeptide is Unconventional myosin-Ic (Myo1c) (Mus musculus (Mouse)).